Here is a 152-residue protein sequence, read N- to C-terminus: SsrA-binding protein (152 aa).

This sequence belongs to the SmpB family.

The protein resides in the cytoplasm. In terms of biological role, required for rescue of stalled ribosomes mediated by trans-translation. Binds to transfer-messenger RNA (tmRNA), required for stable association of tmRNA with ribosomes. tmRNA and SmpB together mimic tRNA shape, replacing the anticodon stem-loop with SmpB. tmRNA is encoded by the ssrA gene; the 2 termini fold to resemble tRNA(Ala) and it encodes a 'tag peptide', a short internal open reading frame. During trans-translation Ala-aminoacylated tmRNA acts like a tRNA, entering the A-site of stalled ribosomes, displacing the stalled mRNA. The ribosome then switches to translate the ORF on the tmRNA; the nascent peptide is terminated with the 'tag peptide' encoded by the tmRNA and targeted for degradation. The ribosome is freed to recommence translation, which seems to be the essential function of trans-translation. This chain is SsrA-binding protein, found in Rickettsia prowazekii (strain Madrid E).